We begin with the raw amino-acid sequence, 175 residues long: B9 domain-containing protein 2 (175 aa).

Positions Ala2–Ser118 constitute a C2 B9-type domain.

It belongs to the B9D family. In terms of assembly, part of the tectonic-like complex (also named B9 complex). Interacts with TUBG1.

The protein resides in the cytoplasm. Its subcellular location is the cytoskeleton. The protein localises to the cilium basal body. It is found in the cilium axoneme. It localises to the nucleus. Functionally, component of the tectonic-like complex, a complex localized at the transition zone of primary cilia and acting as a barrier that prevents diffusion of transmembrane proteins between the cilia and plasma membranes. In Bos taurus (Bovine), this protein is B9 domain-containing protein 2 (B9D2).